The sequence spans 119 residues: Acidic phospholipase A2 E (119 aa).

Cystine bridges form between Cys11-Cys71, Cys26-Cys118, Cys28-Cys44, Cys43-Cys99, Cys50-Cys92, Cys60-Cys85, and Cys78-Cys90. The Ca(2+) site is built by Tyr27, Gly29, and Gly31. The active site involves His47. Ca(2+) is bound at residue Asp48. Residue Asp93 is part of the active site.

It belongs to the phospholipase A2 family. Group I subfamily. D49 sub-subfamily. It depends on Ca(2+) as a cofactor. Expressed by the venom gland.

It localises to the secreted. It carries out the reaction a 1,2-diacyl-sn-glycero-3-phosphocholine + H2O = a 1-acyl-sn-glycero-3-phosphocholine + a fatty acid + H(+). Functionally, PLA2 catalyzes the calcium-dependent hydrolysis of the 2-acyl groups in 3-sn-phosphoglycerides. The polypeptide is Acidic phospholipase A2 E (Naja oxiana (Central Asian cobra)).